The chain runs to 620 residues: Glutathione-regulated potassium-efflux system protein KefC (620 aa).

Helical transmembrane passes span 4-24 (HTLV…PIAV), 26-46 (LGLG…LWGL), 54-74 (SILH…GLEL), 90-110 (GALQ…LLGL), 114-134 (VAEL…MQAM), 149-169 (FAVL…IPLL), 178-198 (MGAF…VVLL), 218-238 (VFSA…EEVG), 270-290 (GLLL…GTLI), 294-314 (LRIV…LWLI), 327-347 (WFAV…GAAQ), and 359-379 (SLTL…VILN). One can recognise an RCK N-terminal domain in the interval 399-518 (QPRVIIAGFG…AGVEKPERET (120 aa)). Residues 597 to 620 (GWQGTEEGKHTGNMADEPETKPSS) are disordered.

It belongs to the monovalent cation:proton antiporter 2 (CPA2) transporter (TC 2.A.37) family. KefC subfamily. Homodimer. Interacts with the regulatory subunit KefF.

The protein localises to the cell inner membrane. Functionally, pore-forming subunit of a potassium efflux system that confers protection against electrophiles. Catalyzes K(+)/H(+) antiport. The sequence is that of Glutathione-regulated potassium-efflux system protein KefC from Shigella flexneri serotype 5b (strain 8401).